The chain runs to 355 residues: Guanine nucleotide-binding protein G(z) subunit alpha (355 aa).

The span at 1–14 shows a compositional bias: basic and acidic residues; that stretch reads MGCRQSSEEKEAAR. The tract at residues 1 to 26 is disordered; it reads MGCRQSSEEKEAARRSRRIDRHLRSE. G2 is lipidated: N-myristoyl glycine. C3 is lipidated: S-palmitoyl cysteine. Positions 32–355 constitute a G-alpha domain; it reads REIKLLLLGT…QNNLKYIGLC (324 aa). The G1 motif stretch occupies residues 35-48; that stretch reads KLLLLGTSNSGKST. GTP contacts are provided by residues 40-47, 176-182, 201-205, 270-273, and A327; these read GTSNSGKS, LRSRDMT, DVGGQ, and NKKD. Positions 47 and 182 each coordinate Mg(2+). Positions 174 to 182 are G2 motif; sequence DILRSRDMT. The G3 motif stretch occupies residues 197 to 206; sequence FKMVDVGGQR. The tract at residues 266–273 is G4 motif; the sequence is ILFLNKKD. The G5 motif stretch occupies residues 325–330; that stretch reads TCATDT.

Belongs to the G-alpha family. G(i/o/t/z) subfamily. G-proteins are composed of 3 units; alpha, beta and gamma. The alpha chain contains the guanine nucleotide binding site. Interacts with ADGRB2.

It localises to the membrane. Guanine nucleotide-binding proteins (G proteins) are involved as modulators or transducers in various transmembrane signaling systems. The protein is Guanine nucleotide-binding protein G(z) subunit alpha (Gnaz) of Mus musculus (Mouse).